The primary structure comprises 502 residues: ATP synthase subunit alpha (502 aa).

ATP is bound at residue 169–176 (GDRQTGKT).

Belongs to the ATPase alpha/beta chains family. In terms of assembly, F-type ATPases have 2 components, CF(1) - the catalytic core - and CF(0) - the membrane proton channel. CF(1) has five subunits: alpha(3), beta(3), gamma(1), delta(1), epsilon(1). CF(0) has three main subunits: a(1), b(2) and c(9-12). The alpha and beta chains form an alternating ring which encloses part of the gamma chain. CF(1) is attached to CF(0) by a central stalk formed by the gamma and epsilon chains, while a peripheral stalk is formed by the delta and b chains.

The protein resides in the cell membrane. The catalysed reaction is ATP + H2O + 4 H(+)(in) = ADP + phosphate + 5 H(+)(out). In terms of biological role, produces ATP from ADP in the presence of a proton gradient across the membrane. The alpha chain is a regulatory subunit. The polypeptide is ATP synthase subunit alpha (Bacillus velezensis (strain DSM 23117 / BGSC 10A6 / LMG 26770 / FZB42) (Bacillus amyloliquefaciens subsp. plantarum)).